Reading from the N-terminus, the 219-residue chain is Ribosomal RNA small subunit methyltransferase Nep1 (219 aa).

S-adenosyl-L-methionine contacts are provided by residues Gly-178, Gly-183, and 196–201 (LYKAPL).

Belongs to the class IV-like SAM-binding methyltransferase superfamily. RNA methyltransferase NEP1 family. In terms of assembly, homodimer.

The catalysed reaction is a pseudouridine in rRNA + S-adenosyl-L-methionine = an N(1)-methylpseudouridine in rRNA + S-adenosyl-L-homocysteine + H(+). Its function is as follows. Methyltransferase involved in ribosomal biogenesis. Specifically catalyzes the N1-methylation of the pseudouridine corresponding to position 914 in M.jannaschii 16S rRNA. This Thermococcus onnurineus (strain NA1) protein is Ribosomal RNA small subunit methyltransferase Nep1.